The primary structure comprises 1598 residues: Pentafunctional AROM polypeptide (1598 aa).

A 3-dehydroquinate synthase region spans residues 1 to 384; that stretch reads MGVPTKISIL…YEPRACTVSN (384 aa). NAD(+)-binding positions include 44 to 46, 81 to 84, 114 to 116, and Asp119; these read DTN, ESSK, and GGV. Arg130 lines the 7-phospho-2-dehydro-3-deoxy-D-arabino-heptonate pocket. 139–140 serves as a coordination point for NAD(+); sequence TT. The 7-phospho-2-dehydro-3-deoxy-D-arabino-heptonate site is built by Asp146 and Lys152. Lys161 provides a ligand contact to NAD(+). Residue Asn162 participates in 7-phospho-2-dehydro-3-deoxy-D-arabino-heptonate binding. Residues 179 to 182 and Asn190 contribute to the NAD(+) site; that span reads FLNT. Glu194 contacts Zn(2+). 7-phospho-2-dehydro-3-deoxy-D-arabino-heptonate is bound by residues 194 to 197 and Lys250; that span reads EVIK. The Proton acceptor; for 3-dehydroquinate synthase activity role is filled by Glu260. 7-phospho-2-dehydro-3-deoxy-D-arabino-heptonate is bound by residues 264 to 268 and His271; that span reads RNLLN. Residue His271 participates in Zn(2+) binding. His275 functions as the Proton acceptor; for 3-dehydroquinate synthase activity in the catalytic mechanism. The 7-phospho-2-dehydro-3-deoxy-D-arabino-heptonate site is built by His287 and Lys356. Residue His287 participates in Zn(2+) binding. The segment at 397–842 is EPSP synthase; it reads VYPGFPKSLN…WDTLAQTFKV (446 aa). Cys824 acts as the For EPSP synthase activity in catalysis. Positions 867-1059 are shikimate kinase; the sequence is AASIFIIGMR…RRKENTFFVS (193 aa). Residue 874 to 881 coordinates ATP; that stretch reads GMRGAGKT. A 3-dehydroquinase region spans residues 1060–1280; the sequence is LTFPDLTPAS…AAPGQLSARE (221 aa). The Proton acceptor; for 3-dehydroquinate dehydratase activity role is filled by His1183. Lys1211 acts as the Schiff-base intermediate with substrate; for 3-dehydroquinate dehydratase activity in catalysis. Residues 1293–1598 are shikimate dehydrogenase; it reads AKKFAVIGKP…GVSSSDDIIS (306 aa).

It in the N-terminal section; belongs to the sugar phosphate cyclases superfamily. Dehydroquinate synthase family. In the 2nd section; belongs to the EPSP synthase family. This sequence in the 3rd section; belongs to the shikimate kinase family. The protein in the 4th section; belongs to the type-I 3-dehydroquinase family. It in the C-terminal section; belongs to the shikimate dehydrogenase family. As to quaternary structure, homodimer. Zn(2+) is required as a cofactor.

It localises to the cytoplasm. It carries out the reaction 7-phospho-2-dehydro-3-deoxy-D-arabino-heptonate = 3-dehydroquinate + phosphate. The enzyme catalyses 3-dehydroquinate = 3-dehydroshikimate + H2O. The catalysed reaction is shikimate + NADP(+) = 3-dehydroshikimate + NADPH + H(+). It catalyses the reaction shikimate + ATP = 3-phosphoshikimate + ADP + H(+). It carries out the reaction 3-phosphoshikimate + phosphoenolpyruvate = 5-O-(1-carboxyvinyl)-3-phosphoshikimate + phosphate. It functions in the pathway metabolic intermediate biosynthesis; chorismate biosynthesis; chorismate from D-erythrose 4-phosphate and phosphoenolpyruvate: step 2/7. It participates in metabolic intermediate biosynthesis; chorismate biosynthesis; chorismate from D-erythrose 4-phosphate and phosphoenolpyruvate: step 3/7. The protein operates within metabolic intermediate biosynthesis; chorismate biosynthesis; chorismate from D-erythrose 4-phosphate and phosphoenolpyruvate: step 4/7. Its pathway is metabolic intermediate biosynthesis; chorismate biosynthesis; chorismate from D-erythrose 4-phosphate and phosphoenolpyruvate: step 5/7. It functions in the pathway metabolic intermediate biosynthesis; chorismate biosynthesis; chorismate from D-erythrose 4-phosphate and phosphoenolpyruvate: step 6/7. Its function is as follows. The AROM polypeptide catalyzes 5 consecutive enzymatic reactions in prechorismate polyaromatic amino acid biosynthesis. This is Pentafunctional AROM polypeptide from Paracoccidioides lutzii (strain ATCC MYA-826 / Pb01) (Paracoccidioides brasiliensis).